The chain runs to 141 residues: Large ribosomal subunit protein uL11 (141 aa).

It belongs to the universal ribosomal protein uL11 family. In terms of assembly, part of the ribosomal stalk of the 50S ribosomal subunit. Interacts with L10 and the large rRNA to form the base of the stalk. L10 forms an elongated spine to which L12 dimers bind in a sequential fashion forming a multimeric L10(L12)X complex. One or more lysine residues are methylated.

Its function is as follows. Forms part of the ribosomal stalk which helps the ribosome interact with GTP-bound translation factors. The protein is Large ribosomal subunit protein uL11 of Chlamydia pneumoniae (Chlamydophila pneumoniae).